The chain runs to 580 residues: Multidrug resistance-like ATP-binding protein MdlB (580 aa).

Residues 25-310 form the ABC transmembrane type-1 domain; the sequence is IILAFFLLLS…ITIQQSILQQ (286 aa). The next 5 helical transmembrane spans lie at 26 to 46, 61 to 81, 142 to 162, 165 to 185, and 258 to 278; these read ILAFFLLLSGATSEVLGPILI, FQLILIIIVIFIMLQILAVFF, VGPTFFRSITLIIIILFAMFT, WHMAIITIFIIPLVIIVMSIY, and LLSALVLCSFMFLFSYFSIGV. The ABC transporter domain occupies 341-575; the sequence is INIKNLSFKY…KGFYWKMYNF (235 aa). 375–382 lines the ATP pocket; that stretch reads GQTGSGKS.

It belongs to the ABC transporter superfamily. Drug exporter-2 (TC 3.A.1.117) family.

The protein resides in the cell membrane. The enzyme catalyses ATP + H2O + xenobioticSide 1 = ADP + phosphate + xenobioticSide 2.. This Buchnera aphidicola subsp. Schizaphis graminum (strain Sg) protein is Multidrug resistance-like ATP-binding protein MdlB (mdlB).